Reading from the N-terminus, the 170-residue chain is Flavodoxin (170 aa).

One can recognise a Flavodoxin-like domain in the interval Ile-4–Lys-165.

Belongs to the flavodoxin family. FMN serves as cofactor.

Functionally, low-potential electron donor to a number of redox enzymes. This Picosynechococcus sp. (strain ATCC 27264 / PCC 7002 / PR-6) (Agmenellum quadruplicatum) protein is Flavodoxin (isiB).